Consider the following 260-residue polypeptide: Rhythmically expressed gene 2 protein (260 aa).

In Drosophila melanogaster (Fruit fly), this protein is Rhythmically expressed gene 2 protein (Reg-2).